Reading from the N-terminus, the 729-residue chain is Receptor-like protein 2 (729 aa).

Residues 1 to 44 (MRSKAKGLVRPLITKPVQPLSSHMHLFLLCILFLSALFLTLSEA) form the signal peptide. Positions 45–82 (VCNLQDRESLIWFSGNVSSSVSPLNWNLSIDCCSWEGI) are N-cap. Topologically, residues 45–707 (VCNLQDRESL…AKENDELNRT (663 aa)) are extracellular. N-linked (GlcNAc...) asparagine glycans are attached at residues N60 and N71. LRR repeat units follow at residues 89–113 (DSHVTVISLPSRGLSGTLASSVQNI), 114–137 (HRLSRLDLSYNRLSGPLPPGFFST), 139–163 (DQLMILNLSYNSFNGELPLEQAFGN), 168–193 (FFSIQTLDLSSNLLEGEILRSSVYLQ), 195–219 (TINLISFNVSNNSFTGPIPSFMCRS), 220–244 (SPQLSKLDFSYNDFSGHISQELGRC), 245–268 (LRLTVLQAGFNNLSGVIPSEIYNL), 269–292 (SELEQLFLPANQLTGKIDNNITRL), 293–316 (RKLTSLALYSNHLEGEIPMDIGNL), 317–340 (SSLRSLQLHINNINGTVPLSLANC), 342–364 (KLVKLNLRVNQLGGGLTELEFSQ), 365–389 (LQSLKVLDLGNNSFTGALPDKIFSC), 391–413 (SLTAIRFAGNKLTGEISPQVLEL), 414–437 (ESLSFMGLSDNKLTNITGALSILQ), 439–464 (CRKLSTLILAKNFYDETVPSKEDFLS), 468–492 (FPKLRIFGVGACRLRGEIPAWLINL), 493–515 (NKVEVMDLSMNRFVGSIPGWLGT), 516–540 (LPDLFYLDLSDNLLTGELPKELFQL), 542–560 (ALMSQKITENNYLELPIFL), and 561–584 (NPNNVTTNQQYNKLYSFPPTIYIR). N-linked (GlcNAc...) asparagine glycosylation is found at N145 and N163. Residues N202 and N205 are each glycosylated (N-linked (GlcNAc...) asparagine). N-linked (GlcNAc...) asparagine glycans are attached at residues N256, N267, N288, N315, N330, and N339. The N-linked (GlcNAc...) asparagine glycan is linked to N375. N428 carries an N-linked (GlcNAc...) asparagine glycan. 7 N-linked (GlcNAc...) asparagine glycosylation sites follow: N564, N587, N611, N622, N635, N657, and N705. LRR repeat units follow at residues 599 to 623 (LKVLHILELLGNNLSGSIPDELSNL), 624 to 647 (TNLERLDLSNNNLSGSIPWSLTNL), and 649 to 672 (FLSYFNVANNSLEGPIPSEGQFDT). The segment at 690 to 707 (LTSCKPTRAKENDELNRT) is C-cap/acidic domain. The chain crosses the membrane as a helical span at residues 708–728 (FLMGIAIGYFLSFVSILVVRA). A topological domain (cytoplasmic) is located at residue W729.

This sequence belongs to the RLP family.

It localises to the cell membrane. In terms of biological role, involved in the perception of CLV3 and CLV3-like peptides, that act as extracellular signals regulating meristems maintenance. This chain is Receptor-like protein 2, found in Arabidopsis thaliana (Mouse-ear cress).